Reading from the N-terminus, the 592-residue chain is Aspartate--tRNA(Asp/Asn) ligase (592 aa).

L-aspartate is bound at residue glutamate 176. Positions 200 to 203 are aspartate; the sequence is QIFK. Arginine 222 contacts L-aspartate. Residues 222 to 224 and glutamine 231 each bind ATP; that span reads RDE. Position 450 (histidine 450) interacts with L-aspartate. Residue glutamate 484 coordinates ATP. Residue arginine 491 participates in L-aspartate binding. 536–539 contributes to the ATP binding site; sequence GLDR.

Belongs to the class-II aminoacyl-tRNA synthetase family. Type 1 subfamily. In terms of assembly, homodimer.

The protein localises to the cytoplasm. It carries out the reaction tRNA(Asx) + L-aspartate + ATP = L-aspartyl-tRNA(Asx) + AMP + diphosphate. Functionally, aspartyl-tRNA synthetase with relaxed tRNA specificity since it is able to aspartylate not only its cognate tRNA(Asp) but also tRNA(Asn). Reaction proceeds in two steps: L-aspartate is first activated by ATP to form Asp-AMP and then transferred to the acceptor end of tRNA(Asp/Asn). This is Aspartate--tRNA(Asp/Asn) ligase from Anoxybacillus flavithermus (strain DSM 21510 / WK1).